The following is a 659-amino-acid chain: mRNA export factor ICP27 homolog (659 aa).

The Zn(2+) site is built by cysteine 130, histidine 266, cysteine 268, and cysteine 273. The CHC2-type zinc finger occupies 130–273; that stretch reads CMMSNGERPP…CEHACNDNAC (144 aa). The tract at residues 317-659 is disordered; the sequence is GSFDDSRSAT…GEDGESDMTL (343 aa). Over residues 324–336 the composition is skewed to low complexity; the sequence is SATSGDGSSCSSA. Over residues 354-365 the composition is skewed to polar residues; that stretch reads SDQTDTSNNGTV. Residues 387–397 show a composition bias toward basic and acidic residues; it reads SPLDRPNDYHY. Residues 413–427 show a composition bias toward low complexity; it reads GSGSSSTEAVSTASA. Residues 483–499 show a composition bias toward basic and acidic residues; sequence SPERRSSEERSSSDQRR. A compositionally biased stretch (polar residues) spans 503 to 513; it reads LSRSASATSGG. Residues 553-575 are compositionally biased toward low complexity; that stretch reads SRSNTPPSSPSKPDSAPAASASP. Residues 598–610 are compositionally biased toward basic and acidic residues; sequence ESVRVSERFETGD. Composition is skewed to acidic residues over residues 617–628 and 646–659; these read ETEDESDDEDDQ and SETDGEDGESDMTL.

Belongs to the HHV-1 ICP27 protein family.

It localises to the virion tegument. The protein resides in the virion. It is found in the host nucleus. Its subcellular location is the host cytoplasm. Its function is as follows. Immediate early (EI) protein that plays many roles during productive infection including regulation of viral gene expression and nuclear export of intronless viral RNAs. The protein is mRNA export factor ICP27 homolog of Elephantid herpesvirus 1 (isolate Asian elephant/Berlin/Kiba/1998) (EIHV-1).